We begin with the raw amino-acid sequence, 695 residues long: DNA ligase (695 aa).

NAD(+) contacts are provided by residues 36 to 40, 85 to 86, and E123; these read DADYD and SL. The N6-AMP-lysine intermediate role is filled by K125. NAD(+) is bound by residues R146, E182, K318, and K342. Residues C436, C439, C454, and C460 each coordinate Zn(2+). A BRCT domain is found at 617–695; that stretch reads LQSGDLAGKT…EDGLKALLSQ (79 aa).

Belongs to the NAD-dependent DNA ligase family. LigA subfamily. Requires Mg(2+) as cofactor. Mn(2+) serves as cofactor.

It carries out the reaction NAD(+) + (deoxyribonucleotide)n-3'-hydroxyl + 5'-phospho-(deoxyribonucleotide)m = (deoxyribonucleotide)n+m + AMP + beta-nicotinamide D-nucleotide.. Its function is as follows. DNA ligase that catalyzes the formation of phosphodiester linkages between 5'-phosphoryl and 3'-hydroxyl groups in double-stranded DNA using NAD as a coenzyme and as the energy source for the reaction. It is essential for DNA replication and repair of damaged DNA. This chain is DNA ligase, found in Bordetella avium (strain 197N).